The chain runs to 391 residues: MSLNPRDAVIVDFGRTPMGRSKGGMHRNTRAETMSAHLISKVLERNAKIDPAEVEDVIWGCVNQTLEQGWNIARMASLMTQIPHTSAGQTVSRLCGSSMSALHTAVQAIQTGNGDVFVVGGVEHMGHVGMMHGVDPNPHLSLYAAKASGMMGLTAEMLGKMHGISREAQDAFGERSHRLAHKATVEGKFKDEIIPMQGYDENGFLKVFDYDETIRPETTLESLATLKPAFNPKGGTVTAGTSSQITDGASCMIVMSAQRAQDLGIQPMAVVRAMAVAGVDPAIMGYGPVPSTQKALKRAGLTMADIDFVELNEAFAAQALPVLKDLKLLDKMEEKVNLHGGAIALGHPFGCSGARISGTLLNVMKQNGGTLGVSTMCVGLGQGITTVFERV.

Cys-95 functions as the Acyl-thioester intermediate in the catalytic mechanism. Active-site proton acceptor residues include His-347 and Cys-377.

It belongs to the thiolase-like superfamily. Thiolase family. As to quaternary structure, heterotetramer of two alpha chains (FadB) and two beta chains (FadA).

The protein localises to the cytoplasm. It carries out the reaction an acyl-CoA + acetyl-CoA = a 3-oxoacyl-CoA + CoA. It functions in the pathway lipid metabolism; fatty acid beta-oxidation. Functionally, catalyzes the final step of fatty acid oxidation in which acetyl-CoA is released and the CoA ester of a fatty acid two carbons shorter is formed. In Ectopseudomonas mendocina (strain ymp) (Pseudomonas mendocina), this protein is 3-ketoacyl-CoA thiolase.